Consider the following 1588-residue polypeptide: Autotransporter adhesin EhaG (1588 aa).

Positions Met1–Ala53 are cleaved as a signal peptide. Residues Asn54–Arg1499 are surface exposed passenger domain. The interval Met1500 to Trp1588 is translocator domain. Transmembrane regions (beta stranded) follow at residues Gly1534–Thr1544, Glu1548–Val1558, Lys1567–Asn1573, and Glu1577–Trp1588.

Belongs to the autotransporter-2 (AT-2) (TC 1.B.40) family. Homotrimer.

It localises to the cell surface. It is found in the cell outer membrane. Functionally, mediates aggregation, biofilm formation and adhesion to a range of extracellular matrix (ECM) proteins, such as fibronectin, fibrinogen, laminin and collagen types I, II, III, and V. Mediates adhesion to intestinal epithelial cells. This chain is Autotransporter adhesin EhaG, found in Escherichia coli O157:H7.